A 380-amino-acid chain; its full sequence is Queuine tRNA-ribosyltransferase (380 aa).

Asp96 acts as the Proton acceptor in catalysis. Substrate-binding positions include 96-100 (DSGGF), Asp150, Gln193, and Gly220. Residues 251–257 (GVGAPDS) form an RNA binding region. Asp270 serves as the catalytic Nucleophile. Positions 275–279 (TRIAR) are RNA binding; important for wobble base 34 recognition. Residues Cys308, Cys310, Cys313, and His339 each coordinate Zn(2+).

This sequence belongs to the queuine tRNA-ribosyltransferase family. As to quaternary structure, homodimer. Within each dimer, one monomer is responsible for RNA recognition and catalysis, while the other monomer binds to the replacement base PreQ1. The cofactor is Zn(2+).

It catalyses the reaction 7-aminomethyl-7-carbaguanine + guanosine(34) in tRNA = 7-aminomethyl-7-carbaguanosine(34) in tRNA + guanine. Its pathway is tRNA modification; tRNA-queuosine biosynthesis. Functionally, catalyzes the base-exchange of a guanine (G) residue with the queuine precursor 7-aminomethyl-7-deazaguanine (PreQ1) at position 34 (anticodon wobble position) in tRNAs with GU(N) anticodons (tRNA-Asp, -Asn, -His and -Tyr). Catalysis occurs through a double-displacement mechanism. The nucleophile active site attacks the C1' of nucleotide 34 to detach the guanine base from the RNA, forming a covalent enzyme-RNA intermediate. The proton acceptor active site deprotonates the incoming PreQ1, allowing a nucleophilic attack on the C1' of the ribose to form the product. After dissociation, two additional enzymatic reactions on the tRNA convert PreQ1 to queuine (Q), resulting in the hypermodified nucleoside queuosine (7-(((4,5-cis-dihydroxy-2-cyclopenten-1-yl)amino)methyl)-7-deazaguanosine). This chain is Queuine tRNA-ribosyltransferase, found in Streptococcus uberis (strain ATCC BAA-854 / 0140J).